Here is a 113-residue protein sequence, read N- to C-terminus: uncharacterized protein (113 aa).

This is an uncharacterized protein from Escherichia coli (strain K12).